A 517-amino-acid polypeptide reads, in one-letter code: Maturase K (517 aa).

Belongs to the intron maturase 2 family. MatK subfamily.

Its subcellular location is the plastid. It localises to the chloroplast. Usually encoded in the trnK tRNA gene intron. Probably assists in splicing its own and other chloroplast group II introns. The chain is Maturase K from Paris tetraphylla.